Reading from the N-terminus, the 148-residue chain is Small ribosomal subunit protein uS15 (148 aa).

It belongs to the universal ribosomal protein uS15 family.

The polypeptide is Small ribosomal subunit protein uS15 (RPS13) (Encephalitozoon cuniculi (strain GB-M1) (Microsporidian parasite)).